Here is a 117-residue protein sequence, read N- to C-terminus: Fluoride-specific ion channel FluC 2 (117 aa).

A run of 2 helical transmembrane segments spans residues 1–21 and 46–66; these read MISI…RSAI and FLIG…AFFV. The Na(+) site is built by G71 and T74. Residues 95–115 form a helical membrane-spanning segment; it reads LFLNYSLLQFIIGFIACYIGY.

Belongs to the fluoride channel Fluc/FEX (TC 1.A.43) family.

It localises to the cell membrane. It carries out the reaction fluoride(in) = fluoride(out). Its activity is regulated as follows. Na(+) is not transported, but it plays an essential structural role and its presence is essential for fluoride channel function. Functionally, fluoride-specific ion channel. Important for reducing fluoride concentration in the cell, thus reducing its toxicity. The polypeptide is Fluoride-specific ion channel FluC 2 (Staphylococcus aureus (strain MSSA476)).